A 265-amino-acid chain; its full sequence is 4-hydroxy-tetrahydrodipicolinate reductase (265 aa).

Residues 7–12 (GASGRM) and D33 contribute to the NAD(+) site. R34 serves as a coordination point for NADP(+). NAD(+) is bound by residues 96–98 (GTT) and 120–123 (SANM). Catalysis depends on H153, which acts as the Proton donor/acceptor. H154 serves as a coordination point for (S)-2,3,4,5-tetrahydrodipicolinate. The active-site Proton donor is the K157. 163–164 (GT) serves as a coordination point for (S)-2,3,4,5-tetrahydrodipicolinate.

The protein belongs to the DapB family.

The protein localises to the cytoplasm. It carries out the reaction (S)-2,3,4,5-tetrahydrodipicolinate + NAD(+) + H2O = (2S,4S)-4-hydroxy-2,3,4,5-tetrahydrodipicolinate + NADH + H(+). The catalysed reaction is (S)-2,3,4,5-tetrahydrodipicolinate + NADP(+) + H2O = (2S,4S)-4-hydroxy-2,3,4,5-tetrahydrodipicolinate + NADPH + H(+). The protein operates within amino-acid biosynthesis; L-lysine biosynthesis via DAP pathway; (S)-tetrahydrodipicolinate from L-aspartate: step 4/4. Functionally, catalyzes the conversion of 4-hydroxy-tetrahydrodipicolinate (HTPA) to tetrahydrodipicolinate. This chain is 4-hydroxy-tetrahydrodipicolinate reductase, found in Burkholderia pseudomallei (strain 1106a).